We begin with the raw amino-acid sequence, 429 residues long: Apolipoprotein A-IV (429 aa).

Residues 1-20 (MFLKAVVLTLALVAVTGARA) form the signal peptide. 13 consecutive repeat copies span residues 33 to 54 (DYFS…KSEL), 60 to 81 (ALFQ…KKLV), 82 to 103 (PFAT…EEIR), 115 to 136 (PHAN…QRLE), 137 to 158 (PYTD…RQLT), 159 to 180 (PYAQ…TSLR), 181 to 202 (PHAD…ERLT), 203 to 224 (PYAD…RSLA), 225 to 246 (PYAQ…FQMK), 247 to 268 (KNAE…QRLA), 269 to 286 (PLAE…EGLQ), 287 to 308 (KSLA…LRVE), and 309 to 330 (PYGE…QKLG). The tract at residues 33-330 (DYFSQLSSNA…QMEQLRQKLG (298 aa)) is 13 X 22 AA approximate tandem repeats. The segment at 359–429 (KEKESQDNTL…QVQMLAPLES (71 aa)) is disordered. Residues 381 to 420 (QEQQQEQEQEQQQQQEQQQQQEQQREQQQQEQQQEQQQEQ) show a composition bias toward low complexity.

This sequence belongs to the apolipoprotein A1/A4/E family. As to quaternary structure, homodimer. Post-translationally, phosphorylation sites are present in the extracellular medium. Secreted in plasma.

The protein localises to the secreted. Its function is as follows. May have a role in chylomicrons and VLDL secretion and catabolism. Required for efficient activation of lipoprotein lipase by ApoC-II; potent activator of LCAT. Apoa-IV is a major component of HDL and chylomicrons. The chain is Apolipoprotein A-IV (APOA4) from Macaca fascicularis (Crab-eating macaque).